A 568-amino-acid polypeptide reads, in one-letter code: Potassium-transporting ATPase potassium-binding subunit (568 aa).

Transmembrane regions (helical) follow at residues 3–23, 64–84, 133–153, 179–199, 255–275, 281–301, 375–395, 418–438, 497–517, and 536–556; these read TEIL…YPLG, FLKA…VLLV, FVIM…MAGI, ILLP…TPMG, MVEC…LGFY, LAYS…CINV, FGGV…AVFI, IATI…AISS, IVLI…AGLL, and TFGI…FFPV.

Belongs to the KdpA family. As to quaternary structure, the system is composed of three essential subunits: KdpA, KdpB and KdpC.

The protein localises to the cell inner membrane. Functionally, part of the high-affinity ATP-driven potassium transport (or Kdp) system, which catalyzes the hydrolysis of ATP coupled with the electrogenic transport of potassium into the cytoplasm. This subunit binds the periplasmic potassium ions and delivers the ions to the membrane domain of KdpB through an intramembrane tunnel. This Bacteroides thetaiotaomicron (strain ATCC 29148 / DSM 2079 / JCM 5827 / CCUG 10774 / NCTC 10582 / VPI-5482 / E50) protein is Potassium-transporting ATPase potassium-binding subunit.